A 554-amino-acid polypeptide reads, in one-letter code: Hydroxylamine reductase (554 aa).

Positions 3, 6, 18, and 25 each coordinate [2Fe-2S] cluster. Residues H252, E276, C320, C408, C436, C461, E495, and K497 each contribute to the hybrid [4Fe-2O-2S] cluster site. Cysteine persulfide is present on C408.

It belongs to the HCP family. It depends on [2Fe-2S] cluster as a cofactor. Hybrid [4Fe-2O-2S] cluster is required as a cofactor.

Its subcellular location is the cytoplasm. It carries out the reaction A + NH4(+) + H2O = hydroxylamine + AH2 + H(+). In terms of biological role, catalyzes the reduction of hydroxylamine to form NH(3) and H(2)O. The polypeptide is Hydroxylamine reductase (Shewanella baltica (strain OS195)).